Here is a 191-residue protein sequence, read N- to C-terminus: tRNA-specific adenosine deaminase 2 (191 aa).

One can recognise a CMP/dCMP-type deaminase domain in the interval 20–145 (EETEKWMEQA…SVLDIASADL (126 aa)). His-71 provides a ligand contact to Zn(2+). Residue Glu-73 is the Proton donor of the active site. Zn(2+) is bound by residues Cys-107 and Cys-110.

This sequence belongs to the cytidine and deoxycytidylate deaminase family. ADAT2 subfamily. Requires Zn(2+) as cofactor.

The enzyme catalyses adenosine(34) in tRNA + H2O + H(+) = inosine(34) in tRNA + NH4(+). Functionally, probably participates in deamination of adenosine-34 to inosine in many tRNAs. This chain is tRNA-specific adenosine deaminase 2 (DEADC1), found in Bos taurus (Bovine).